Here is a 263-residue protein sequence, read N- to C-terminus: Pyruvate formate-lyase-activating enzyme (263 aa).

Residues 23–260 (VDGPGIRFVV…TETYEEYKKR (238 aa)) form the Radical SAM core domain. Residues Cys-37, Cys-41, and Cys-44 each coordinate [4Fe-4S] cluster. S-adenosyl-L-methionine-binding positions include 43–45 (YCH), Gly-87, 142–144 (DIK), and His-215.

The protein belongs to the organic radical-activating enzymes family. It depends on [4Fe-4S] cluster as a cofactor.

It is found in the cytoplasm. It carries out the reaction glycyl-[formate C-acetyltransferase] + reduced [flavodoxin] + S-adenosyl-L-methionine = glycin-2-yl radical-[formate C-acetyltransferase] + semiquinone [flavodoxin] + 5'-deoxyadenosine + L-methionine + H(+). Functionally, activation of pyruvate formate-lyase under anaerobic conditions by generation of an organic free radical, using S-adenosylmethionine and reduced flavodoxin as cosubstrates to produce 5'-deoxy-adenosine. In Streptococcus mutans serotype c (strain ATCC 700610 / UA159), this protein is Pyruvate formate-lyase-activating enzyme (act).